The sequence spans 88 residues: Small ribosomal subunit protein uS19 (88 aa).

This sequence belongs to the universal ribosomal protein uS19 family.

In terms of biological role, protein S19 forms a complex with S13 that binds strongly to the 16S ribosomal RNA. This chain is Small ribosomal subunit protein uS19, found in Carsonella ruddii (strain PV).